Reading from the N-terminus, the 807-residue chain is Histone transcription regulator slm9 (807 aa).

WD repeat units lie at residues 62–100 (SFDS…KAFQ) and 102–140 (LSGP…ETIV). Positions 144 to 164 (EHADSNHQPAVSIEESKEAVE) are disordered. 4 WD repeats span residues 182 to 221 (GHHT…VEKS), 230 to 273 (PTGN…YDIN), 276 to 322 (GHQG…PMAV), and 326 to 367 (LSCS…EKMD). Residues 388–437 (NKNAAADRTTSPTQGQPESPSKSILLRPPPSIASSPESKRRKCPKKFVAR) are disordered. The segment covering 395–409 (RTTSPTQGQPESPSK) has biased composition (polar residues). Ser406, Ser421, and Ser422 each carry phosphoserine. Basic residues predominate over residues 426-435 (KRRKCPKKFV). 2 WD repeats span residues 492–526 (DCSW…YIYS) and 528–574 (AGRL…AIHS).

It belongs to the WD repeat HIR1 family. In terms of assembly, interacts with hip1 and hip3.

The protein localises to the cytoplasm. It is found in the nucleus. In terms of biological role, probably required for replication-independent chromatin assembly. Required for transcriptional silencing in the outer repeat (otr) centromeric repeats and the Tf2 long terminal repeat retrotransposons. May play an indirect role in the regulation of cdc2 and/or wee1 at the G2/M stage of mitosis. In Schizosaccharomyces pombe (strain 972 / ATCC 24843) (Fission yeast), this protein is Histone transcription regulator slm9 (slm9).